The chain runs to 180 residues: RNA polymerase sigma-E factor (180 aa).

Residues Asp36–Trp49 carry the Polymerase core binding motif. A DNA-binding region (H-T-H motif) is located at residues Thr130–His149.

It belongs to the sigma-70 factor family. ECF subfamily.

The protein localises to the cytoplasm. Sigma factors are initiation factors that promote the attachment of RNA polymerase to specific initiation sites and are then released. This sigma factor is required for the synthesis of the antibiotic actinomycin. The chain is RNA polymerase sigma-E factor (sigE) from Streptomyces antibioticus.